We begin with the raw amino-acid sequence, 302 residues long: tRNA pseudouridine synthase B (302 aa).

Asp-38 serves as the catalytic Nucleophile.

This sequence belongs to the pseudouridine synthase TruB family. Type 1 subfamily.

It catalyses the reaction uridine(55) in tRNA = pseudouridine(55) in tRNA. Functionally, responsible for synthesis of pseudouridine from uracil-55 in the psi GC loop of transfer RNAs. The protein is tRNA pseudouridine synthase B of Geobacillus thermodenitrificans (strain NG80-2).